A 201-amino-acid chain; its full sequence is dITP/XTP pyrophosphatase (201 aa).

9–14 (SNNAGK) serves as a coordination point for substrate. The Mg(2+) site is built by glutamate 41 and aspartate 70. The active-site Proton acceptor is aspartate 70. Substrate is bound by residues serine 71, 155 to 158 (FGYD), lysine 178, and 183 to 184 (HR).

This sequence belongs to the HAM1 NTPase family. As to quaternary structure, homodimer. Requires Mg(2+) as cofactor.

The enzyme catalyses XTP + H2O = XMP + diphosphate + H(+). It catalyses the reaction dITP + H2O = dIMP + diphosphate + H(+). The catalysed reaction is ITP + H2O = IMP + diphosphate + H(+). Functionally, pyrophosphatase that catalyzes the hydrolysis of nucleoside triphosphates to their monophosphate derivatives, with a high preference for the non-canonical purine nucleotides XTP (xanthosine triphosphate), dITP (deoxyinosine triphosphate) and ITP. Seems to function as a house-cleaning enzyme that removes non-canonical purine nucleotides from the nucleotide pool, thus preventing their incorporation into DNA/RNA and avoiding chromosomal lesions. This is dITP/XTP pyrophosphatase from Methylococcus capsulatus (strain ATCC 33009 / NCIMB 11132 / Bath).